The primary structure comprises 370 residues: Phosphoserine aminotransferase (370 aa).

Residue Arg42 coordinates L-glutamate. Positions 108, 158, 182, and 205 each coordinate pyridoxal 5'-phosphate. Residue Lys206 is modified to N6-(pyridoxal phosphate)lysine. Position 247 to 248 (247 to 248 (NT)) interacts with pyridoxal 5'-phosphate.

Belongs to the class-V pyridoxal-phosphate-dependent aminotransferase family. SerC subfamily. As to quaternary structure, homodimer. The cofactor is pyridoxal 5'-phosphate.

The protein resides in the cytoplasm. It carries out the reaction O-phospho-L-serine + 2-oxoglutarate = 3-phosphooxypyruvate + L-glutamate. It catalyses the reaction 4-(phosphooxy)-L-threonine + 2-oxoglutarate = (R)-3-hydroxy-2-oxo-4-phosphooxybutanoate + L-glutamate. Its pathway is amino-acid biosynthesis; L-serine biosynthesis; L-serine from 3-phospho-D-glycerate: step 2/3. It participates in cofactor biosynthesis; pyridoxine 5'-phosphate biosynthesis; pyridoxine 5'-phosphate from D-erythrose 4-phosphate: step 3/5. Its function is as follows. Catalyzes the reversible conversion of 3-phosphohydroxypyruvate to phosphoserine and of 3-hydroxy-2-oxo-4-phosphonooxybutanoate to phosphohydroxythreonine. In Albidiferax ferrireducens (strain ATCC BAA-621 / DSM 15236 / T118) (Rhodoferax ferrireducens), this protein is Phosphoserine aminotransferase.